Here is a 332-residue protein sequence, read N- to C-terminus: Cell growth regulator with RING finger domain protein 1 (332 aa).

An RING-type zinc finger spans residues 274–309; it reads CVVCQNGGVNWVLLPCRHACLCDSCVCYFKQCPMCR.

As to expression, highly expressed in testis, lower levels of expression is seen in skeletal muscle, liver, lung and brain.

Its subcellular location is the nucleus. It localises to the endoplasmic reticulum. In terms of biological role, able to inhibit growth in several cell lines. The polypeptide is Cell growth regulator with RING finger domain protein 1 (Cgrrf1) (Rattus norvegicus (Rat)).